The sequence spans 573 residues: 2-isopropylmalate synthase (573 aa).

One can recognise a Pyruvate carboxyltransferase domain in the interval 37–314 (PRWLSTDLRD…DPQIDFSDID (278 aa)). Positions 46, 253, 255, and 289 each coordinate Mg(2+). Residues 456–573 (NPDNPWGRIQ…VVSAVNRATR (118 aa)) form a regulatory domain region.

It belongs to the alpha-IPM synthase/homocitrate synthase family. LeuA type 2 subfamily. Homodimer. Mg(2+) serves as cofactor.

Its subcellular location is the cytoplasm. It carries out the reaction 3-methyl-2-oxobutanoate + acetyl-CoA + H2O = (2S)-2-isopropylmalate + CoA + H(+). Its pathway is amino-acid biosynthesis; L-leucine biosynthesis; L-leucine from 3-methyl-2-oxobutanoate: step 1/4. Its function is as follows. Catalyzes the condensation of the acetyl group of acetyl-CoA with 3-methyl-2-oxobutanoate (2-ketoisovalerate) to form 3-carboxy-3-hydroxy-4-methylpentanoate (2-isopropylmalate). In Streptomyces coelicolor (strain ATCC BAA-471 / A3(2) / M145), this protein is 2-isopropylmalate synthase.